The primary structure comprises 1590 residues: MSTANGSSPTRISILGEESIIVDYGLWLNYVTHDLLNNIPSSTYVLITDTNLHSLYVPQFETAFTSASAAATSNSSATPPPPRAPRLLTYAIPPGEGSKSRDTKAEIEDWLLEQQCTRDTVIIALGGGVIGDMIGYVAATFMRGVRFVQVPTTLLAMVDSSIGGKTAIDTPMGKNLVGAFWQPRRIYIDLAFLNTLPAREFINGMAEVIKTAAIWDAEEFSALEQNAPAILSAVRTPASAAADPNARLLPISDILKRIVLGSARVKAHIVSADEKEGGLRNLLNFGHSIGHAFEAILTPQVLHGEAVAVGMVKEAELARHLGILRPAAVARLVKCIASYDLPISLEDKRLVRMTGGKSCPVDIVLAKMAVDKKNEGKQKKIVLLSAIGKTHEPKASSVDDRAIRVVLSAAVRVQPGVRPGLKVDVTPPGSKSISNRALILAALGKGPCRIKNLLHSDDTEHMLNAIGKLRGASFSWEDDGEILVVEGRGGQLFAPSEGELYLGNAGTASRFLTTVAALCSPSSDGDATSTVLTGNARMKLRPIGALVDALRSNGINIEYMGKESSLPIRVDAAGGFGGGVIELAATVSSQYVSSLLMAAPYAKEPVTLRLVGGKPISQPYIDMTIAMMRSFGIDVQRSTTEADTYHIPQGIYTNPAEYTVESDASSATYPLAVAAITGTTCTIPNIGSASLQGDARFAVEVLRPMGCTVEQSASSTTVTGPPLGQLKGIPHVDMEPMTDAFLTASVLAAVASGTTQITGIANQRVKECNRIKAMKDQLAKFGVHCNELDDGIEVTGNSWTELTEPREIYCYDDHRVAMSFSVLSVISPHPVLILERECTGKTWPGWWDVLSGVFGVAMDGEEPLSHSTVTGSGPNNRSVFVIGMRGAGKSTAGKWMASTLGRTFMDLDTELERRHNTTIPDMVKSEVGWEGFRKFEVELLREMMETKPEGYIFSCGGGIVETPEAREALISYCRAGGAVLLVHRDTTHVLEYLNRDKSRPAWSEEIEKVYIRRKPWYQECSNFEYHSPHLGVEESAVEMPVDFARFVSLICGKSSHLREVKAKPHSFFVSLTVPNITAHTATIPKAVVGSDAVELRVDLLQDHSPEFVVRQVALLRSLCKMPIIFTVRTVSQGGRFPDADHAGALALYRVALRMGVEYVDVEMTMPEDVIETVTKAKGYTSIIASHHDPKGTLSWRNGAWMQYYNKALHYGDVIKLVGWCRTDEDNFSLLTFKTRMLAAHESTPIIALNMGEQGKLSRVLNGFMTPVTHAALPAAAAPGQLTAAEIRQALSLLSKIPKRKFYLFGKPISKSRSPILHNTLFQQTGLPHTYSRLETDKVAEVETTIRASDFGGASVTIPLKLDIMPMLDEITDAAKTIGAVNTIIPVPVQAGKQRLRGDNTDWCGMVHSLRMAGVTGKRACPASGVVVGSGGTTRAAIFALHSLGFSPIYIIARNATSVETIASSFPAEYDIRNLQGTLAYTEGMARPEVVISTIPATGDVDEGILMAVDSVLTLPMGTSNTGAARVLLEMAYTPTFTNMMARAKDAGWGTVPGFEVLAAQGWFQFQLWTDIKPVYSTASSIVMNGTSDSS.

The interval Met-1 to Asp-400 is 3-dehydroquinate synthase. Residues Asp-49 to Asn-51, Glu-96 to Lys-99, Gly-127 to Val-129, and Asp-132 each bind NAD(+). A 7-phospho-2-dehydro-3-deoxy-D-arabino-heptonate-binding site is contributed by Arg-143. Position 152–153 (Thr-152–Thr-153) interacts with NAD(+). 7-phospho-2-dehydro-3-deoxy-D-arabino-heptonate is bound by residues Asp-159 and Lys-165. Position 174 (Lys-174) interacts with NAD(+). A 7-phospho-2-dehydro-3-deoxy-D-arabino-heptonate-binding site is contributed by Asn-175. Residues Phe-192–Thr-195 and Asn-203 each bind NAD(+). Glu-207 contacts Zn(2+). Residues Glu-207 to Lys-210 and Lys-266 contribute to the 7-phospho-2-dehydro-3-deoxy-D-arabino-heptonate site. Glu-276 functions as the Proton acceptor; for 3-dehydroquinate synthase activity in the catalytic mechanism. 7-phospho-2-dehydro-3-deoxy-D-arabino-heptonate-binding positions include Arg-280–Asn-284 and His-287. His-287 provides a ligand contact to Zn(2+). Catalysis depends on His-291, which acts as the Proton acceptor; for 3-dehydroquinate synthase activity. Residues His-303 and Lys-372 each contribute to the 7-phospho-2-dehydro-3-deoxy-D-arabino-heptonate site. His-303 is a binding site for Zn(2+). Residues Val-413–Val-856 are EPSP synthase. The For EPSP synthase activity role is filled by Cys-838. The shikimate kinase stretch occupies residues Asn-876 to Ser-1070. Residue Gly-883–Ser-890 participates in ATP binding. Residues Leu-1071–Glu-1285 form a 3-dehydroquinase region. His-1187 (proton acceptor; for 3-dehydroquinate dehydratase activity) is an active-site residue. Lys-1215 functions as the Schiff-base intermediate with substrate; for 3-dehydroquinate dehydratase activity in the catalytic mechanism. A shikimate dehydrogenase region spans residues Lys-1298–Ser-1590.

The protein in the N-terminal section; belongs to the sugar phosphate cyclases superfamily. Dehydroquinate synthase family. It in the 2nd section; belongs to the EPSP synthase family. This sequence in the 3rd section; belongs to the shikimate kinase family. In the 4th section; belongs to the type-I 3-dehydroquinase family. The protein in the C-terminal section; belongs to the shikimate dehydrogenase family. Homodimer. It depends on Zn(2+) as a cofactor.

The protein resides in the cytoplasm. The enzyme catalyses 7-phospho-2-dehydro-3-deoxy-D-arabino-heptonate = 3-dehydroquinate + phosphate. The catalysed reaction is 3-dehydroquinate = 3-dehydroshikimate + H2O. It carries out the reaction shikimate + NADP(+) = 3-dehydroshikimate + NADPH + H(+). It catalyses the reaction shikimate + ATP = 3-phosphoshikimate + ADP + H(+). The enzyme catalyses 3-phosphoshikimate + phosphoenolpyruvate = 5-O-(1-carboxyvinyl)-3-phosphoshikimate + phosphate. The protein operates within metabolic intermediate biosynthesis; chorismate biosynthesis; chorismate from D-erythrose 4-phosphate and phosphoenolpyruvate: step 2/7. Its pathway is metabolic intermediate biosynthesis; chorismate biosynthesis; chorismate from D-erythrose 4-phosphate and phosphoenolpyruvate: step 3/7. It participates in metabolic intermediate biosynthesis; chorismate biosynthesis; chorismate from D-erythrose 4-phosphate and phosphoenolpyruvate: step 4/7. It functions in the pathway metabolic intermediate biosynthesis; chorismate biosynthesis; chorismate from D-erythrose 4-phosphate and phosphoenolpyruvate: step 5/7. The protein operates within metabolic intermediate biosynthesis; chorismate biosynthesis; chorismate from D-erythrose 4-phosphate and phosphoenolpyruvate: step 6/7. Its function is as follows. The AROM polypeptide catalyzes 5 consecutive enzymatic reactions in prechorismate polyaromatic amino acid biosynthesis. This Pyricularia oryzae (strain 70-15 / ATCC MYA-4617 / FGSC 8958) (Rice blast fungus) protein is Pentafunctional AROM polypeptide.